We begin with the raw amino-acid sequence, 205 residues long: Small ribosomal subunit protein uS4 (205 aa).

Residues 18 to 46 form a disordered region; sequence NIWGRPKSPVNRREYGPGQHGQRRKGKLS. Residues 94–157 form the S4 RNA-binding domain; the sequence is RRLDTVVYRA…KQLTFVLEAN (64 aa).

It belongs to the universal ribosomal protein uS4 family. Part of the 30S ribosomal subunit. Contacts protein S5. The interaction surface between S4 and S5 is involved in control of translational fidelity.

Functionally, one of the primary rRNA binding proteins, it binds directly to 16S rRNA where it nucleates assembly of the body of the 30S subunit. In terms of biological role, with S5 and S12 plays an important role in translational accuracy. This is Small ribosomal subunit protein uS4 from Rhodopseudomonas palustris (strain BisB18).